Consider the following 163-residue polypeptide: ATP synthase subunit delta, mitochondrial (163 aa).

The N-terminal 18 residues, 1–18 (MLARTIQRFSVVAKRGYA), are a transit peptide targeting the mitochondrion.

It belongs to the ATPase epsilon chain family. As to quaternary structure, subunit of the F-type ATPase which has 2 components, CF(1) - the catalytic core - and CF(0) - the membrane proton channel.

Its subcellular location is the mitochondrion. It is found in the mitochondrion inner membrane. Functionally, mitochondrial membrane ATP synthase (F(1)F(0) ATP synthase or Complex V) produces ATP from ADP in the presence of a proton gradient across the membrane which is generated by electron transport complexes of the respiratory chain. F-type ATPases consist of two structural domains, F(1) - containing the extramembraneous catalytic core, and F(0) - containing the membrane proton channel, linked together by a central stalk and a peripheral stalk. During catalysis, ATP turnover in the catalytic domain of F(1) is coupled via a rotary mechanism of the central stalk subunits to proton translocation. Part of the complex F(1) domain and of the central stalk which is part of the complex rotary element. In Caenorhabditis elegans, this protein is ATP synthase subunit delta, mitochondrial.